Here is a 656-residue protein sequence, read N- to C-terminus: UvrABC system protein B (656 aa).

The 158-residue stretch at 23 to 180 (EGIKKGYRFQ…QHLAKIGYER (158 aa)) folds into the Helicase ATP-binding domain. 36-43 (GVTGSGKT) contributes to the ATP binding site. The short motif at 89–112 (YYDYYQPEAYVPTKDLYIEKNADI) is the Beta-hairpin element. The Helicase C-terminal domain maps to 426-588 (QVDDLISEIK…ITPKTIVKPL (163 aa)). A UVR domain is found at 614 to 649 (EEYLSLLEEEMYRAASELRYEDAAKLRDEIFRLREE).

The protein belongs to the UvrB family. In terms of assembly, forms a heterotetramer with UvrA during the search for lesions. Interacts with UvrC in an incision complex.

The protein localises to the cytoplasm. Its function is as follows. The UvrABC repair system catalyzes the recognition and processing of DNA lesions. A damage recognition complex composed of 2 UvrA and 2 UvrB subunits scans DNA for abnormalities. Upon binding of the UvrA(2)B(2) complex to a putative damaged site, the DNA wraps around one UvrB monomer. DNA wrap is dependent on ATP binding by UvrB and probably causes local melting of the DNA helix, facilitating insertion of UvrB beta-hairpin between the DNA strands. Then UvrB probes one DNA strand for the presence of a lesion. If a lesion is found the UvrA subunits dissociate and the UvrB-DNA preincision complex is formed. This complex is subsequently bound by UvrC and the second UvrB is released. If no lesion is found, the DNA wraps around the other UvrB subunit that will check the other stand for damage. This Pseudothermotoga lettingae (strain ATCC BAA-301 / DSM 14385 / NBRC 107922 / TMO) (Thermotoga lettingae) protein is UvrABC system protein B.